Reading from the N-terminus, the 326-residue chain is Malate dehydrogenase (326 aa).

12–18 (GGTGQIA) lines the NAD(+) pocket. 2 residues coordinate substrate: Arg-93 and Arg-99. NAD(+)-binding positions include Asn-106, Gln-113, and 130–132 (VGN). The substrate site is built by Asn-132 and Arg-163. Catalysis depends on His-188, which acts as the Proton acceptor.

The protein belongs to the LDH/MDH superfamily. MDH type 2 family.

It carries out the reaction (S)-malate + NAD(+) = oxaloacetate + NADH + H(+). Functionally, catalyzes the reversible oxidation of malate to oxaloacetate. This is Malate dehydrogenase from Chlamydia trachomatis serovar D (strain ATCC VR-885 / DSM 19411 / UW-3/Cx).